The following is a 234-amino-acid chain: UPF0173 metal-dependent hydrolase Msp_0516 (234 aa).

The protein belongs to the UPF0173 family.

The polypeptide is UPF0173 metal-dependent hydrolase Msp_0516 (Methanosphaera stadtmanae (strain ATCC 43021 / DSM 3091 / JCM 11832 / MCB-3)).